A 308-amino-acid polypeptide reads, in one-letter code: Protein doublecortin (308 aa).

Residues 21–104 (ARVILFRNGD…AEPLNTEVIP (84 aa)) form the Doublecortin 1 domain. A disordered region spans residues 115 to 167 (EVSDQDDEPKPSKPFVSSVPPPPTPTPTSSSGTTTTSQPTLSASPSVSSAQSP). The span at 141 to 167 (PTSSSGTTTTSQPTLSASPSVSSAQSP) shows a compositional bias: low complexity. The Doublecortin 2 domain maps to 194 to 277 (KVIMCFRNGD…GETLNPLDFS (84 aa)). Residues 282 to 308 (EHVKQKKLQEQQQQASEQQKPQEQEIF) are disordered. Low complexity predominate over residues 291–300 (EQQQQASEQQ).

Interacts with lis1.

The protein localises to the cytoplasm. It is found in the cytoskeleton. Its function is as follows. Has a cytoskeleton-independent function in chemotactic signaling during development. The sequence is that of Protein doublecortin (dcx) from Dictyostelium discoideum (Social amoeba).